Reading from the N-terminus, the 961-residue chain is Retinoblastoma-related protein 1 (961 aa).

Residues 404–606 (TPVSTAMTTA…EKGSSMYNSL (203 aa)) form a domain A region. The tract at residues 404–819 (TPVSTAMTTA…NEMFIPSVKP (416 aa)) is pocket. The spacer stretch occupies residues 607–728 (AVAKPSLAAE…PGGGGETCAE (122 aa)). Residues 729-819 (TAINVFFGKI…NEMFIPSVKP (91 aa)) form a domain B region. Residues 829–856 (NAEKNNHNDGQGPASPKPSPFPKLPDMS) are disordered.

The protein belongs to the retinoblastoma protein (RB) family.

Its subcellular location is the nucleus. Its function is as follows. Regulator of biological processes that recruits a histone deacetylase to control gene transcription. May play a role in the entry into mitosis, negatively regulating the cell proliferation. Formation of stable complexes with geminiviridae replication-associated proteins may create a cellular environment which favors viral DNA replication. The protein is Retinoblastoma-related protein 1 (RB1) of Nicotiana tabacum (Common tobacco).